A 182-amino-acid chain; its full sequence is Lipoprotein signal peptidase (182 aa).

Helical transmembrane passes span 15 to 35, 44 to 64, 65 to 85, and 97 to 117; these read IYLG…FLVI, LEVF…FVFG, AFQD…VFLI, and PWGW…KFFV. Active-site residues include aspartate 140 and aspartate 162. Residues 155-175 form a helical membrane-spanning segment; the sequence is WPAFNVADSCVTIGLTILIFT.

The protein belongs to the peptidase A8 family.

It localises to the cell inner membrane. The catalysed reaction is Release of signal peptides from bacterial membrane prolipoproteins. Hydrolyzes -Xaa-Yaa-Zaa-|-(S,diacylglyceryl)Cys-, in which Xaa is hydrophobic (preferably Leu), and Yaa (Ala or Ser) and Zaa (Gly or Ala) have small, neutral side chains.. It functions in the pathway protein modification; lipoprotein biosynthesis (signal peptide cleavage). Functionally, this protein specifically catalyzes the removal of signal peptides from prolipoproteins. The sequence is that of Lipoprotein signal peptidase from Leptospira interrogans serogroup Icterohaemorrhagiae serovar Lai (strain 56601).